A 362-amino-acid polypeptide reads, in one-letter code: Ribosomal RNA large subunit methyltransferase M (362 aa).

Residues S194, 227 to 230 (CPGG), D246, D266, and D284 contribute to the S-adenosyl-L-methionine site. The Proton acceptor role is filled by K313.

The protein belongs to the class I-like SAM-binding methyltransferase superfamily. RNA methyltransferase RlmE family. RlmM subfamily. In terms of assembly, monomer.

It localises to the cytoplasm. It carries out the reaction cytidine(2498) in 23S rRNA + S-adenosyl-L-methionine = 2'-O-methylcytidine(2498) in 23S rRNA + S-adenosyl-L-homocysteine + H(+). Its function is as follows. Catalyzes the 2'-O-methylation at nucleotide C2498 in 23S rRNA. The protein is Ribosomal RNA large subunit methyltransferase M of Aggregatibacter aphrophilus (strain NJ8700) (Haemophilus aphrophilus).